Here is a 510-residue protein sequence, read N- to C-terminus: MKERLVIFDTTLRDGEQSPGASMTMEEKVRIARQLERMGVDVIEAGFPAASKGDFEAVKAVAEAVSNSTVCGLSRAIEADINRAGEALQANQNMRIHTFIATSPIHMKNKLRMSPDRVIEQAIKAVKWARQYTDNVEFSPEDAGRSEIDFLCRILEAVIDAGARTLNIPDTVGYTMPDQFGGLIRTLRERIPNSDKAVFSVHCHNDLGLAVANSLSAVMNGARQVECTINGLGERAGNAALEEVVMAVRTRQDYFPCDTRIDTTQIVSTSKLVSGITGFPVQPNKAIVGANAFAHESGIHQDGVLKHRETYEIMRAEDVGWGANKLLLGKHSGRNAFRSRLKELGIELESEEKLNTIFIRFKDLADKKHEIFDEDLHALVSDEAQIPEEHYRLLSLVAHSETGEIPFAQVVIATGNNEQQAESEGSGPVDATFRAIEKILNSKAELQLFSVNNITSGTDALGEVTVRLQKVGRIVNGHGADTDIIAASAKAYLNACNKLHSSLERTHPQV.

Residues 5–267 (LVIFDTTLRD…DTRIDTTQIV (263 aa)) form the Pyruvate carboxyltransferase domain. Residues Asp14, His202, His204, and Asn238 each contribute to the Mn(2+) site. Positions 392–510 (RLLSLVAHSE…SSLERTHPQV (119 aa)) are regulatory domain.

It belongs to the alpha-IPM synthase/homocitrate synthase family. LeuA type 1 subfamily. As to quaternary structure, homodimer. Mn(2+) serves as cofactor.

The protein localises to the cytoplasm. The catalysed reaction is 3-methyl-2-oxobutanoate + acetyl-CoA + H2O = (2S)-2-isopropylmalate + CoA + H(+). It participates in amino-acid biosynthesis; L-leucine biosynthesis; L-leucine from 3-methyl-2-oxobutanoate: step 1/4. Its function is as follows. Catalyzes the condensation of the acetyl group of acetyl-CoA with 3-methyl-2-oxobutanoate (2-ketoisovalerate) to form 3-carboxy-3-hydroxy-4-methylpentanoate (2-isopropylmalate). The protein is 2-isopropylmalate synthase of Nitrosomonas eutropha (strain DSM 101675 / C91 / Nm57).